The chain runs to 444 residues: Putative GTP cyclohydrolase URC1 (444 aa).

Residue 268 to 272 (RVHDE) participates in GTP binding. Zn(2+) is bound by residues Cys273, Cys284, and Cys286. Residue 315-317 (EGR) participates in GTP binding. Asp353 serves as the catalytic Proton acceptor. Residue Arg355 is the Nucleophile of the active site. GTP is bound by residues Ser377 and Lys382.

This sequence belongs to the GTP cyclohydrolase II family.

It localises to the cytoplasm. The protein localises to the nucleus. Involved in uracil catabolism. The chain is Putative GTP cyclohydrolase URC1 (URC1) from Lachancea kluyveri (Yeast).